An 846-amino-acid chain; its full sequence is Translation initiation factor IF-2 (846 aa).

The disordered stretch occupies residues 198–219 (YKREEEEKKSKAKKAGGKGFKK). The span at 207–219 (SKAKKAGGKGFKK) shows a compositional bias: basic residues. Positions 345 to 512 (SRAPVVTIMG…AVLLQSEVLE (168 aa)) constitute a tr-type G domain. The tract at residues 354–361 (GHVDHGKT) is G1. 354–361 (GHVDHGKT) provides a ligand contact to GTP. The tract at residues 379 to 383 (GITQH) is G2. The G3 stretch occupies residues 400–403 (DTPG). GTP is bound by residues 400 to 404 (DTPGH) and 454 to 457 (NKID). The interval 454-457 (NKID) is G4. The segment at 490 to 492 (SAK) is G5.

This sequence belongs to the TRAFAC class translation factor GTPase superfamily. Classic translation factor GTPase family. IF-2 subfamily.

It is found in the cytoplasm. In terms of biological role, one of the essential components for the initiation of protein synthesis. Protects formylmethionyl-tRNA from spontaneous hydrolysis and promotes its binding to the 30S ribosomal subunits. Also involved in the hydrolysis of GTP during the formation of the 70S ribosomal complex. The chain is Translation initiation factor IF-2 from Francisella tularensis subsp. novicida (strain U112).